The following is a 99-amino-acid chain: Malonate decarboxylase acyl carrier protein (99 aa).

At serine 25 the chain carries O-(phosphoribosyl dephospho-coenzyme A)serine.

The protein belongs to the MdcC family. Covalently binds the prosthetic group of malonate decarboxylase.

Its subcellular location is the cytoplasm. Functionally, subunit of malonate decarboxylase, it is an acyl carrier protein to which acetyl and malonyl thioester residues are bound via a 2'-(5''-phosphoribosyl)-3'-dephospho-CoA prosthetic group and turn over during the catalytic mechanism. In Pseudomonas syringae pv. syringae (strain B728a), this protein is Malonate decarboxylase acyl carrier protein.